The chain runs to 279 residues: Dehydrogenase/reductase SDR family member 4 (279 aa).

37 to 61 provides a ligand contact to NADP(+); the sequence is LVTASTDGIGFAIARRLAQDGAHVV. Lys-93 is subject to N6-acetyllysine; alternate. Lys-93 carries the post-translational modification N6-succinyllysine; alternate. Position 106 is an N6-acetyllysine (Lys-106). Residue Ser-170 participates in substrate binding. The Proton acceptor role is filled by Tyr-183. NADP(+) is bound at residue Lys-187. Position 221 is a phosphoserine (Ser-221). Residue Lys-235 is modified to N6-succinyllysine. A Peroxisomal targeting signal motif is present at residues 277–279; it reads SHL.

This sequence belongs to the short-chain dehydrogenases/reductases (SDR) family. Homotetramer.

The protein localises to the peroxisome. The enzyme catalyses a secondary alcohol + NADP(+) = a ketone + NADPH + H(+). It catalyses the reaction 3alpha-hydroxy-5beta-pregnan-20-one + NADP(+) = 5beta-pregnan-3,20-dione + NADPH + H(+). It carries out the reaction 5beta-dihydrotestosterone + NADPH + H(+) = 5beta-androstane-3alpha,17beta-diol + NADP(+). The catalysed reaction is all-trans-retinol + NADP(+) = all-trans-retinal + NADPH + H(+). The enzyme catalyses isatin + NADPH + H(+) = 3-hydroxyindolin-2-one + NADP(+). Its function is as follows. NADPH-dependent oxidoreductase which catalyzes the reduction of a variety of compounds bearing carbonyl groups including ketosteroids, alpha-dicarbonyl compounds, aldehydes, aromatic ketones and quinones. Reduces all-trans-retinal and 9-cis retinal. Reduces 3-ketosteroids and benzil into 3alpha-hydroxysteroids and S-benzoin, respectively, in contrast to the stereoselectivity of primates DHRS4s which produce 3beta-hydroxysteroids and R-benzoin. In the reverse reaction, catalyzes the NADP-dependent oxidation of 3alpha-hydroxysteroids and alcohol, but with much lower efficiency. Involved in the metabolism of 3alpha-hydroxysteroids, retinoid, isatin and xenobiotic carbonyl compounds. This chain is Dehydrogenase/reductase SDR family member 4 (DHRS4), found in Bos taurus (Bovine).